Reading from the N-terminus, the 333-residue chain is Gap junction alpha-4 protein (333 aa).

The Cytoplasmic portion of the chain corresponds to 1–20 (MGDWGFLEKLLDQVQEHSTV). The chain crosses the membrane as a helical span at residues 21 to 40 (VGKIWLTVLFIFRILILGLA). The Extracellular segment spans residues 41-76 (GESVWGDEQSDFECNTAQPGCTNVCYDQAFPISHIR). A helical membrane pass occupies residues 77-99 (YWVLQFLFVSTPTLVYLGHVIYL). The Cytoplasmic portion of the chain corresponds to 100-148 (SRREERLRQKEGELRALPAKDPQVERALAAVERQMAKISVAEDGRLRIR). A helical transmembrane segment spans residues 149 to 165 (GALMGTYVASVLCKSVL). The Extracellular segment spans residues 166 to 207 (EAGFLYGQWRLYGWTMEPVFVCQRAPCPYLVDCFVSRPTEKT). Residues 208–230 (IFIIFMLVVGLISLVLNLLELVH) form a helical membrane-spanning segment. Topologically, residues 231-333 (LLCRCLSRGM…SSSASKKQYV (103 aa)) are cytoplasmic. Residues 292–333 (ANLTTEERLASSRPPLFLDPPPQNGQKPPSRPSSSASKKQYV) are disordered. The segment covering 323–333 (PSSSASKKQYV) has biased composition (low complexity).

This sequence belongs to the connexin family. Alpha-type (group II) subfamily. In terms of assembly, a connexon is composed of a hexamer of connexins. Expressed in multiple organs and tissues, including heart, uterus, ovary, and blood vessel endothelium.

It localises to the cell membrane. Its subcellular location is the cell junction. It is found in the gap junction. In terms of biological role, one gap junction consists of a cluster of closely packed pairs of transmembrane channels, the connexons, through which materials of low MW diffuse from one cell to a neighboring cell. This is Gap junction alpha-4 protein (GJA4) from Homo sapiens (Human).